The sequence spans 352 residues: Photosystem II D2 protein (352 aa).

At threonine 2 the chain carries N-acetylthreonine. Threonine 2 bears the Phosphothreonine mark. A helical membrane pass occupies residues 40 to 60 (TAYLALGGWFTGTTFVTSWYT). Histidine 117 provides a ligand contact to chlorophyll a. Residues 124–140 (GFMLRQFEIARSVKIRP) form a helical membrane-spanning segment. Pheophytin a contacts are provided by glutamine 129 and asparagine 142. Residues 152–165 (VFVSVFLIYPLGQS) form a helical membrane-spanning segment. Histidine 197 is a binding site for chlorophyll a. Residues 207 to 227 (AALLCAIHGATVENTLFEDGD) traverse the membrane as a helical segment. A plastoquinone contacts are provided by histidine 214 and phenylalanine 261. Histidine 214 provides a ligand contact to Fe cation. Histidine 268 is a binding site for Fe cation. A helical transmembrane segment spans residues 278–294 (GLWMSAIGVVGLALNLR).

This sequence belongs to the reaction center PufL/M/PsbA/D family. PSII is composed of 1 copy each of membrane proteins PsbA, PsbB, PsbC, PsbD, PsbE, PsbF, PsbH, PsbI, PsbJ, PsbK, PsbL, PsbM, PsbT, PsbX, PsbY, PsbZ, Psb30/Ycf12, at least 3 peripheral proteins of the oxygen-evolving complex and a large number of cofactors. It forms dimeric complexes. The cofactor is The D1/D2 heterodimer binds P680, chlorophylls that are the primary electron donor of PSII, and subsequent electron acceptors. It shares a non-heme iron and each subunit binds pheophytin, quinone, additional chlorophylls, carotenoids and lipids. There is also a Cl(-1) ion associated with D1 and D2, which is required for oxygen evolution. The PSII complex binds additional chlorophylls, carotenoids and specific lipids..

The protein resides in the plastid. The protein localises to the chloroplast thylakoid membrane. It catalyses the reaction 2 a plastoquinone + 4 hnu + 2 H2O = 2 a plastoquinol + O2. In terms of biological role, photosystem II (PSII) is a light-driven water:plastoquinone oxidoreductase that uses light energy to abstract electrons from H(2)O, generating O(2) and a proton gradient subsequently used for ATP formation. It consists of a core antenna complex that captures photons, and an electron transfer chain that converts photonic excitation into a charge separation. The D1/D2 (PsbA/PsbD) reaction center heterodimer binds P680, the primary electron donor of PSII as well as several subsequent electron acceptors. D2 is needed for assembly of a stable PSII complex. This Chlorella vulgaris (Green alga) protein is Photosystem II D2 protein.